The sequence spans 412 residues: Multifunctional CCA protein (412 aa).

ATP is bound by residues glycine 8 and arginine 11. 2 residues coordinate CTP: glycine 8 and arginine 11. Mg(2+) contacts are provided by aspartate 21 and aspartate 23. 3 residues coordinate ATP: arginine 91, arginine 137, and arginine 140. CTP-binding residues include arginine 91, arginine 137, and arginine 140. Residues 228 to 329 (TGIHTLMTLS…VKLFDSIDAW (102 aa)) form the HD domain.

It belongs to the tRNA nucleotidyltransferase/poly(A) polymerase family. Bacterial CCA-adding enzyme type 1 subfamily. In terms of assembly, monomer. Can also form homodimers and oligomers. Mg(2+) is required as a cofactor. The cofactor is Ni(2+).

The enzyme catalyses a tRNA precursor + 2 CTP + ATP = a tRNA with a 3' CCA end + 3 diphosphate. The catalysed reaction is a tRNA with a 3' CCA end + 2 CTP + ATP = a tRNA with a 3' CCACCA end + 3 diphosphate. Catalyzes the addition and repair of the essential 3'-terminal CCA sequence in tRNAs without using a nucleic acid template. Adds these three nucleotides in the order of C, C, and A to the tRNA nucleotide-73, using CTP and ATP as substrates and producing inorganic pyrophosphate. tRNA 3'-terminal CCA addition is required both for tRNA processing and repair. Also involved in tRNA surveillance by mediating tandem CCA addition to generate a CCACCA at the 3' terminus of unstable tRNAs. While stable tRNAs receive only 3'-terminal CCA, unstable tRNAs are marked with CCACCA and rapidly degraded. This Escherichia coli O157:H7 protein is Multifunctional CCA protein.